A 290-amino-acid chain; its full sequence is Lipoyl synthase (290 aa).

[4Fe-4S] cluster-binding residues include cysteine 38, cysteine 43, cysteine 49, cysteine 64, cysteine 68, cysteine 71, and serine 277. One can recognise a Radical SAM core domain in the interval 50 to 266 (WSKGTATFLL…REIALDAGFR (217 aa)).

It belongs to the radical SAM superfamily. Lipoyl synthase family. [4Fe-4S] cluster serves as cofactor.

The protein localises to the cytoplasm. It carries out the reaction [[Fe-S] cluster scaffold protein carrying a second [4Fe-4S](2+) cluster] + N(6)-octanoyl-L-lysyl-[protein] + 2 oxidized [2Fe-2S]-[ferredoxin] + 2 S-adenosyl-L-methionine + 4 H(+) = [[Fe-S] cluster scaffold protein] + N(6)-[(R)-dihydrolipoyl]-L-lysyl-[protein] + 4 Fe(3+) + 2 hydrogen sulfide + 2 5'-deoxyadenosine + 2 L-methionine + 2 reduced [2Fe-2S]-[ferredoxin]. It functions in the pathway protein modification; protein lipoylation via endogenous pathway; protein N(6)-(lipoyl)lysine from octanoyl-[acyl-carrier-protein]: step 2/2. Catalyzes the radical-mediated insertion of two sulfur atoms into the C-6 and C-8 positions of the octanoyl moiety bound to the lipoyl domains of lipoate-dependent enzymes, thereby converting the octanoylated domains into lipoylated derivatives. The protein is Lipoyl synthase of Chlorobaculum tepidum (strain ATCC 49652 / DSM 12025 / NBRC 103806 / TLS) (Chlorobium tepidum).